The following is a 541-amino-acid chain: Phosphatidylethanolamine transferase Mcr-1 (541 aa).

Topologically, residues 1-14 (MMQHTSVWYRRSVS) are cytoplasmic. Residues 15–35 (PFVLVASVAVFLTATANLTFF) traverse the membrane as a helical segment. Residues 36 to 47 (DKISQTYPIADN) lie on the Periplasmic side of the membrane. The helical transmembrane segment at 48 to 68 (LGFVLTIAVVLFGAMLLITTL) threads the bilayer. Over 69–73 (LSSYR) the chain is Cytoplasmic. The chain crosses the membrane as a helical span at residues 74 to 94 (YVLKPVLILLLIMGAVTSYFT). The Periplasmic portion of the chain corresponds to 95–122 (DTYGTVYDTTMLQNALQTDQAETKDLLN). A helical membrane pass occupies residues 123–143 (AAFIMRIIGLGVLPSLLVAFV). Over 144–157 (KVDYPTWGKGLMRR) the chain is Cytoplasmic. Residues 158-178 (LGLIVASLALILLPVVAFSSH) traverse the membrane as a helical segment. Residues 179-541 (YASFFRVHKP…KVKDRTAFIR (363 aa)) are Periplasmic-facing. Residues Glu246 and Thr285 each coordinate Zn(2+). Disulfide bonds link Cys281/Cys291, Cys356/Cys364, and Cys414/Cys422. Thr285 carries the phosphothreonine modification. The Zn(2+) site is built by Asp465 and His466.

The protein belongs to the phosphoethanolamine transferase family. In terms of assembly, monomer. In terms of processing, phosphorylated at Thr-285; may represent an intermediate in the catalytic mechanism.

The protein localises to the cell inner membrane. It catalyses the reaction lipid A (E. coli) + a 1,2-diacyl-sn-glycero-3-phosphoethanolamine + H(+) = lipid A 4'-(2-aminoethyl diphosphate) (E. coli) + a 1,2-diacyl-sn-glycerol. With respect to regulation, EDTA may inhibit activity. May be inhibited by ethanolamine. Functionally, probably catalyzes the addition of a phosphoethanolamine moiety to lipid A. Phosphoethanolamine modification of lipid A confers polymyxin resistance. Confers resistance to polymyxin-type antibiotics such as colistin; in the E.coli strain W3110. In Escherichia coli, this protein is Phosphatidylethanolamine transferase Mcr-1 (mcr1).